Reading from the N-terminus, the 303-residue chain is Secreted mono- and diacylglycerol lipase LIP4 (303 aa).

Positions 1 to 16 (MHFLAFLLCLIPLALC) are cleaved as a signal peptide. Cysteines 54 and 293 form a disulfide. The active-site Nucleophile is the serine 167. Aspartate 224 is an active-site residue.

It belongs to the AB hydrolase superfamily. Lipase family. Class 3 subfamily.

The protein resides in the secreted. The catalysed reaction is a monoacylglycerol + H2O = glycerol + a fatty acid + H(+). It catalyses the reaction a diacylglycerol + H2O = a monoacylglycerol + a fatty acid + H(+). Functionally, secreted lipase involved in Dandruff and seborrheic dermatitis (D/SD) probably via lipase-mediated breakdown of sebaceous lipids and release of irritating free fatty acids. Shows activity against monoglyceride and diglyceride substrates. Due to an absence of fatty acid synthase genes in Malassezia species, secretory lipases are essential for the yeast to generate free fatty acids from degradation of sebum and assimilate them as lipid sources for growth. Plays an essential role at the pathogen-host interface during disease progression. The chain is Secreted mono- and diacylglycerol lipase LIP4 from Malassezia restricta (strain ATCC 96810 / NBRC 103918 / CBS 7877) (Seborrheic dermatitis infection agent).